The sequence spans 290 residues: Putative OX-2 membrane glycoprotein homolog (290 aa).

The N-terminal stretch at M1–A17 is a signal peptide. The Extracellular segment spans residues H18–V267. The Ig-like V-type domain occupies P23 to S135. C41 and C125 form a disulfide bridge. Residues N71, N104, N194, and N202 are each glycosylated (N-linked (GlcNAc...) asparagine; by host). The Ig-like C2-type domain occupies P146 to T236. The chain crosses the membrane as a helical span at residues P268–F288. Topologically, residues K289 to S290 are cytoplasmic.

It localises to the membrane. This Homo sapiens (Human) protein is Putative OX-2 membrane glycoprotein homolog (U85).